A 340-amino-acid chain; its full sequence is Cysteinyl leukotriene receptor 1 (340 aa).

At Met-1–Thr-31 the chain is on the extracellular side. N-linked (GlcNAc...) asparagine glycosylation is found at Asn-6 and Asn-18. A helical membrane pass occupies residues Leu-32–Ile-52. The Cytoplasmic portion of the chain corresponds to Lys-53–Ala-60. The helical transmembrane segment at Tyr-61–Leu-81 threads the bilayer. The Extracellular portion of the chain corresponds to Arg-82–Asn-109. Cys-99 and Cys-176 are oxidised to a cystine. The helical transmembrane segment at Leu-110–Phe-130 threads the bilayer. Over Pro-131–Lys-144 the chain is Cytoplasmic. A helical membrane pass occupies residues Ile-145 to Thr-165. The Extracellular segment spans residues Ser-166–Ser-196. N-linked (GlcNAc...) asparagine glycosylation is present at Asn-172. A helical transmembrane segment spans residues Leu-197–Leu-217. Topologically, residues Thr-218–Lys-233 are cytoplasmic. The chain crosses the membrane as a helical span at residues Ala-234–Ile-254. The Extracellular portion of the chain corresponds to Gln-255–Ser-279. N-linked (GlcNAc...) asparagine glycosylation is present at Asn-265. The helical transmembrane segment at Val-280–Phe-300 threads the bilayer. The Cytoplasmic segment spans residues Ser-301 to Glu-340.

This sequence belongs to the G-protein coupled receptor 1 family.

It localises to the cell membrane. In terms of biological role, receptor for cysteinyl leukotrienes mediating constriction of the microvascular smooth muscle during an inflammatory response. This response is mediated via a G-protein that activates a phosphatidylinositol-calcium second messenger system. This Sus scrofa (Pig) protein is Cysteinyl leukotriene receptor 1 (CYSLTR1).